The primary structure comprises 1080 residues: Carbamoyl phosphate synthase large chain (1080 aa).

Positions 1–403 are carboxyphosphate synthetic domain; it reads MPKRTDLRTI…SLQKAVRGLE (403 aa). Residues Arg-129, Arg-169, Gly-175, Gly-176, Glu-208, Val-210, Glu-215, Gly-241, Val-242, His-243, Gln-285, and Glu-299 each contribute to the ATP site. An ATP-grasp 1 domain is found at 133-328; it reads RVAMQEIGLE…IAKIAAKLAV (196 aa). The Mg(2+) site is built by Gln-285, Glu-299, and Asn-301. Residues Gln-285, Glu-299, and Asn-301 each contribute to the Mn(2+) site. The interval 404–554 is oligomerization domain; it reads TGKVGLEPTG…YSTYEEECEA (151 aa). Residues 555–942 are carbamoyl phosphate synthetic domain; that stretch reads APSDRRKIMI…AFARAQEAGD (388 aa). An ATP-grasp 2 domain is found at 679–876; that stretch reads QKLVQQLGLR…LAKIAARCMT (198 aa). Arg-715, Arg-754, Leu-756, Glu-761, Gly-787, Val-788, His-789, Ser-790, Gln-830, and Glu-847 together coordinate ATP. 3 residues coordinate Mg(2+): Gln-830, Glu-847, and Asn-849. Mn(2+)-binding residues include Gln-830, Glu-847, and Asn-849. Residues 943–1080 enclose the MGS-like domain; sequence IRAPQPGRAF…LQELHKELQV (138 aa). The allosteric domain stretch occupies residues 943 to 1080; sequence IRAPQPGRAF…LQELHKELQV (138 aa).

The protein belongs to the CarB family. In terms of assembly, composed of two chains; the small (or glutamine) chain promotes the hydrolysis of glutamine to ammonia, which is used by the large (or ammonia) chain to synthesize carbamoyl phosphate. Tetramer of heterodimers (alpha,beta)4. The cofactor is Mg(2+). Requires Mn(2+) as cofactor.

The enzyme catalyses hydrogencarbonate + L-glutamine + 2 ATP + H2O = carbamoyl phosphate + L-glutamate + 2 ADP + phosphate + 2 H(+). It carries out the reaction hydrogencarbonate + NH4(+) + 2 ATP = carbamoyl phosphate + 2 ADP + phosphate + 2 H(+). Its pathway is amino-acid biosynthesis; L-arginine biosynthesis; carbamoyl phosphate from bicarbonate: step 1/1. It functions in the pathway pyrimidine metabolism; UMP biosynthesis via de novo pathway; (S)-dihydroorotate from bicarbonate: step 1/3. In terms of biological role, large subunit of the glutamine-dependent carbamoyl phosphate synthetase (CPSase). CPSase catalyzes the formation of carbamoyl phosphate from the ammonia moiety of glutamine, carbonate, and phosphate donated by ATP, constituting the first step of 2 biosynthetic pathways, one leading to arginine and/or urea and the other to pyrimidine nucleotides. The large subunit (synthetase) binds the substrates ammonia (free or transferred from glutamine from the small subunit), hydrogencarbonate and ATP and carries out an ATP-coupled ligase reaction, activating hydrogencarbonate by forming carboxy phosphate which reacts with ammonia to form carbamoyl phosphate. The protein is Carbamoyl phosphate synthase large chain of Xylella fastidiosa (strain 9a5c).